The primary structure comprises 435 residues: Putative GMP synthase [glutamine-hydrolyzing] 2 (435 aa).

In terms of domain architecture, Glutamine amidotransferase type-1; truncated spans 1 to 120 (MKQDMIVILD…VFDTCQAEAN (120 aa)). In terms of domain architecture, GMPS ATP-PPase spans 121–310 (WNMANFVNDQ…LGLPYEMVYR (190 aa)). 148–154 (SGGVDSS) lines the ATP pocket.

In terms of assembly, homodimer.

The enzyme catalyses XMP + L-glutamine + ATP + H2O = GMP + L-glutamate + AMP + diphosphate + 2 H(+). It functions in the pathway purine metabolism; GMP biosynthesis; GMP from XMP (L-Gln route): step 1/1. Catalyzes the synthesis of GMP from XMP. This is Putative GMP synthase [glutamine-hydrolyzing] 2 (guaA2) from Bacteroides thetaiotaomicron (strain ATCC 29148 / DSM 2079 / JCM 5827 / CCUG 10774 / NCTC 10582 / VPI-5482 / E50).